The primary structure comprises 688 residues: Sodium channel and clathrin linker 1 (688 aa).

At alanine 2 the chain carries N-acetylalanine. Residues 69–673 adopt a coiled-coil conformation; that stretch reads ELNGQLKYYQ…SASQQLSVIT (605 aa). Serine 681 is subject to Phosphoserine.

As to quaternary structure, interacts with SCN10A and clathrin. Identified in a complex containing SCN10A, clathrin and SCLT1.

Its subcellular location is the cytoplasm. The protein resides in the cytoskeleton. It localises to the microtubule organizing center. It is found in the centrosome. The protein localises to the centriole. Adapter protein that links SCN10A to clathrin. Regulates SCN10A channel activity, possibly by promoting channel internalization. This Homo sapiens (Human) protein is Sodium channel and clathrin linker 1 (SCLT1).